The sequence spans 279 residues: Proteasome subunit beta (279 aa).

Positions Met1–Gly51 are cleaved as a propeptide — removed in mature form; by autocatalysis. The Nucleophile role is filled by Thr52.

It belongs to the peptidase T1B family. The 20S proteasome core is composed of 14 alpha and 14 beta subunits that assemble into four stacked heptameric rings, resulting in a barrel-shaped structure. The two inner rings, each composed of seven catalytic beta subunits, are sandwiched by two outer rings, each composed of seven alpha subunits. The catalytic chamber with the active sites is on the inside of the barrel. Has a gated structure, the ends of the cylinder being occluded by the N-termini of the alpha-subunits. Is capped by the proteasome-associated ATPase, ARC.

Its subcellular location is the cytoplasm. The enzyme catalyses Cleavage of peptide bonds with very broad specificity.. Its pathway is protein degradation; proteasomal Pup-dependent pathway. Its activity is regulated as follows. The formation of the proteasomal ATPase ARC-20S proteasome complex, likely via the docking of the C-termini of ARC into the intersubunit pockets in the alpha-rings, may trigger opening of the gate for substrate entry. Interconversion between the open-gate and close-gate conformations leads to a dynamic regulation of the 20S proteasome proteolysis activity. In terms of biological role, component of the proteasome core, a large protease complex with broad specificity involved in protein degradation. This is Proteasome subunit beta from Kribbella flavida (strain DSM 17836 / JCM 10339 / NBRC 14399).